Reading from the N-terminus, the 435-residue chain is Adenylosuccinate synthetase (435 aa).

Residues 13-19 (GDEGKGK) and 41-43 (GHT) each bind GTP. The Proton acceptor role is filled by Asp-14. Mg(2+) is bound by residues Asp-14 and Gly-41. IMP contacts are provided by residues 14-17 (DEGK), 39-42 (NAGH), Thr-131, Arg-145, Gln-226, Thr-241, and Arg-309. The Proton donor role is filled by His-42. Residue 305–311 (TVTGRKR) participates in substrate binding. GTP-binding positions include Arg-311, 337–339 (KLD), and 419–421 (STG).

Belongs to the adenylosuccinate synthetase family. Homodimer. Mg(2+) is required as a cofactor.

It localises to the cytoplasm. It catalyses the reaction IMP + L-aspartate + GTP = N(6)-(1,2-dicarboxyethyl)-AMP + GDP + phosphate + 2 H(+). It functions in the pathway purine metabolism; AMP biosynthesis via de novo pathway; AMP from IMP: step 1/2. Functionally, plays an important role in the de novo pathway of purine nucleotide biosynthesis. Catalyzes the first committed step in the biosynthesis of AMP from IMP. This Dechloromonas aromatica (strain RCB) protein is Adenylosuccinate synthetase.